Consider the following 132-residue polypeptide: Small ribosomal subunit protein uS11 (132 aa).

It belongs to the universal ribosomal protein uS11 family. In terms of assembly, part of the 30S ribosomal subunit. Interacts with proteins S7 and S18. Binds to IF-3.

Located on the platform of the 30S subunit, it bridges several disparate RNA helices of the 16S rRNA. Forms part of the Shine-Dalgarno cleft in the 70S ribosome. The polypeptide is Small ribosomal subunit protein uS11 (Clostridium kluyveri (strain NBRC 12016)).